Reading from the N-terminus, the 824-residue chain is Leucine--tRNA ligase (824 aa).

The 'HIGH' region motif lies at 42–52 (PYPSGKIHMGH). Residues 581 to 585 (KMSKS) carry the 'KMSKS' region motif. ATP is bound at residue Lys-584.

Belongs to the class-I aminoacyl-tRNA synthetase family.

It localises to the cytoplasm. The enzyme catalyses tRNA(Leu) + L-leucine + ATP = L-leucyl-tRNA(Leu) + AMP + diphosphate. The chain is Leucine--tRNA ligase from Geobacter sp. (strain M21).